The sequence spans 135 residues: Histone H3 type 1 (135 aa).

The tract at residues 1–40 (MARTKQTARKSTGGKAPRKQLATKAARKTPATGGVKKPHR) is disordered. At Lys5 the chain carries N6-methyllysine. Lys10 bears the N6-acetyllysine; alternate mark. Lys10 carries the post-translational modification N6-methyllysine; alternate. Ser11 carries the post-translational modification Phosphoserine. Residue Thr12 is modified to Phosphothreonine. N6-acetyllysine occurs at positions 15, 19, and 24. Lys28 bears the N6-acetyllysine; alternate mark. Lys28 is subject to N6-methyllysine; alternate. 2 positions are modified to N6-methyllysine: Lys36 and Lys37.

Belongs to the histone H3 family. As to quaternary structure, the nucleosome is a histone octamer containing two molecules each of H2A, H2B, H3 and H4 assembled in one H3-H4 heterotetramer and two H2A-H2B heterodimers. The octamer wraps approximately 147 bp of DNA. In terms of processing, acetylation is generally linked to gene activation. Acetylated to form H3K9ac (11%), H3K14ac (17%), H3K18ac (11%), H3K23ac (16%) and H3K27ac (7%). H3K4, H3K35 and H3K36 are not acetylated. H3K4me prevents acetylation. 32% of the histone H3 are acetylated with, on average, 2.4 acetyl-Lys. They are all continuously deacatylated and re-acetylated with a half-life of approximately 2 minutes. Monomethylated to form H3K4me1 (81%), H3K9me1 (16%), H3K27me1 (25%), H3K35me1 (25%) and H3K36me1 (5%). No methylation at H3K14, H3K18 and H3K23. Methylated by a protein complex that includes Mut11. Set1 methylates specifically H3K4. H3K4me1 is associated with silenced euchromatin. Set3 forms H3K9me1, while H3K9me2 is undetected. H3K9me1 is specifically associated with silent, multi-copy transgenes. Post-translationally, no phosphorylation detected.

The protein localises to the nucleus. It is found in the chromosome. Functionally, core component of nucleosome. Nucleosomes wrap and compact DNA into chromatin, limiting DNA accessibility to the cellular machineries which require DNA as a template. Histones thereby play a central role in transcription regulation, DNA repair, DNA replication and chromosomal stability. DNA accessibility is regulated via a complex set of post-translational modifications of histones, also called histone code, and nucleosome remodeling. In Chlamydomonas reinhardtii (Chlamydomonas smithii), this protein is Histone H3 type 1 (ch3-I).